Reading from the N-terminus, the 215-residue chain is UPF0319 protein VV2_0960 (215 aa).

Residues 1 to 21 (MNIIKPLTCILAMSISGLATA) form the signal peptide.

This sequence belongs to the UPF0319 family.

The chain is UPF0319 protein VV2_0960 from Vibrio vulnificus (strain CMCP6).